The chain runs to 629 residues: tRNA uridine 5-carboxymethylaminomethyl modification enzyme MnmG (629 aa).

Residues G14–G19, V126, and S181 each bind FAD. G273–F287 serves as a coordination point for NAD(+). Q370 provides a ligand contact to FAD.

It belongs to the MnmG family. In terms of assembly, homodimer. Heterotetramer of two MnmE and two MnmG subunits. It depends on FAD as a cofactor.

The protein resides in the cytoplasm. In terms of biological role, NAD-binding protein involved in the addition of a carboxymethylaminomethyl (cmnm) group at the wobble position (U34) of certain tRNAs, forming tRNA-cmnm(5)s(2)U34. This chain is tRNA uridine 5-carboxymethylaminomethyl modification enzyme MnmG, found in Geobacillus thermodenitrificans (strain NG80-2).